The sequence spans 313 residues: Protein sprouty homolog 1 (313 aa).

At methionine 1 the chain carries N-acetylmethionine. Residues 43–152 are disordered; the sequence is QIKAIRGSNE…RSDRVIRTQP (110 aa). A compositionally biased stretch (basic and acidic residues) spans 69–79; it reads PRPEKQERTHE. The span at 106 to 125 shows a compositional bias: low complexity; the sequence is SRSTSTGSAASSGSSSSVSS. One can recognise an SPR domain in the interval 177 to 289; the sequence is QCGKCKCGEC…CYDWTHRPGC (113 aa).

It belongs to the sprouty family. Forms heterodimers with SPRY2. Interacts with TESK1. Interacts with CAV1 (via C-terminus).

The protein localises to the cytoplasm. Its subcellular location is the membrane. Functionally, inhibits fibroblast growth factor (FGF)-induced retinal lens fiber differentiation, probably by inhibiting FGF-mediated phosphorylation of ERK1/2. Inhibits TGFB-induced epithelial-to-mesenchymal transition in lens epithelial cells. This Mus musculus (Mouse) protein is Protein sprouty homolog 1 (Spry1).